Consider the following 388-residue polypeptide: Putative [LysW]-aminoadipate semialdehyde/glutamate semialdehyde transaminase (388 aa).

Residues 100-101 (GT) and F127 contribute to the pyridoxal 5'-phosphate site. R130 provides a ligand contact to substrate. A pyridoxal 5'-phosphate-binding site is contributed by 211 to 214 (DEIQ). K240 is modified (N6-(pyridoxal phosphate)lysine). Position 268 (S268) interacts with substrate. T269 is a binding site for pyridoxal 5'-phosphate.

The protein belongs to the class-III pyridoxal-phosphate-dependent aminotransferase family. LysJ subfamily. Homodimer. The cofactor is pyridoxal 5'-phosphate.

The protein localises to the cytoplasm. It carries out the reaction [amino-group carrier protein]-C-terminal-gamma-(L-lysyl)-L-glutamate + 2-oxoglutarate = [amino-group carrier protein]-C-terminal-N-(1-carboxy-5-oxopentan-1-yl)-L-glutamine + L-glutamate. The enzyme catalyses [amino-group carrier protein]-C-terminal-gamma-(L-ornithyl)-L-glutamate + 2-oxoglutarate = [amino-group carrier protein]-C-terminal-gamma-(L-glutamyl-5-semialdehyde)-L-glutamate + L-glutamate. Its pathway is amino-acid biosynthesis; L-lysine biosynthesis via AAA pathway; L-lysine from L-alpha-aminoadipate (Thermus route): step 4/5. It functions in the pathway amino-acid biosynthesis; L-arginine biosynthesis. Its function is as follows. Involved in both the arginine and lysine biosynthetic pathways. The protein is Putative [LysW]-aminoadipate semialdehyde/glutamate semialdehyde transaminase of Aeropyrum pernix (strain ATCC 700893 / DSM 11879 / JCM 9820 / NBRC 100138 / K1).